The sequence spans 1448 residues: Protein clueless (1448 aa).

3 disordered regions span residues 1-96 (MALE…HAEK), 110-129 (NANVEKPQEGGAPDAEADGD), and 265-286 (RTRPDSVDCTPPEYVTPGVSDP). 2 stretches are compositionally biased toward low complexity: residues 9–26 (NSNATATGDATATATKAS) and 41–66 (NLNPNSNQQNSNQNLVNGNGTAADGP). The segment covering 68–77 (AKKKGKKNRN) has biased composition (basic residues). Over residues 78-88 (KSPTEPTTEAV) the composition is skewed to polar residues. The residue at position 270 (Ser-270) is a Phosphoserine. The Clu domain occupies 424–666 (RAEDAFSSKL…RTFPPDVNFL (243 aa)). Disordered stretches follow at residues 726-773 (SEKS…SGEA), 958-1010 (AVSS…SASD), and 1414-1448 (GEAEDAVSKDIKEQPEAGKQLTNGDKAAATEATSS). Over residues 748–769 (GAEKPDDKEKKNEEEEKKERST) the composition is skewed to basic and acidic residues. Residues 966-981 (KKRGNGGKHNKHKSSK) show a composition bias toward basic residues. Over residues 986–1007 (QQQQQTTGNQNGSSSGSSNSSS) the composition is skewed to low complexity. Positions 1419 to 1429 (AVSKDIKEQPE) are enriched in basic and acidic residues.

It belongs to the CLU family.

The protein resides in the cytoplasm. MRNA-binding protein involved in proper cytoplasmic distribution of mitochondria. This chain is Protein clueless, found in Drosophila melanogaster (Fruit fly).